Reading from the N-terminus, the 278-residue chain is Glycyl-dTMP PLP-dependent decarboxylase (278 aa).

Belongs to the pyridoxal-phosphate-dependent aminodecarboxylase family.

It carries out the reaction 5-C(alpha)-glycyl-dTMP in DNA + H(+) = 5-aminoethyl-dUMP in DNA + CO2. Converts 5-Calpha-glycinylthymidine (Calpha-GlyT) into 5-aminoethyl-2'-deoxyuridine (5-NedU) as a step in the pathway leading to thymidine hypermodifications in the viral genome. As a final result of the pathway of hypermodification, 5-aminoethyl-2'-deoxyuridine (5-NedU) substitutes for about 30% of thymidines in the viral DNA. These modifications probably prevent degradation of viral genome by the host restriction-modification antiviral defense system. This Pseudomonas aeruginosa protein is Glycyl-dTMP PLP-dependent decarboxylase.